The sequence spans 228 residues: MTVQIITIDGPSGSGKGTLAAKLAAYYQFHLLDSGALYRLLGLSLHKHDLLEKLDSHLDMCVNYARQLNIKFETSAEGTLVFLDGEDVTQTIRTERVGEYASKVAAIPELRQALFERQRAFAQTPGLVADGRDMATSIFPEANAKIYLTASAESRAERRVKQLQGMGLDAKINDILANIQARDKRDMEREVAPLKPAADAYIIDSSELTIDQVFKLMVDYVNSRTVSN.

Position 10-18 (10-18 (GPSGSGKGT)) interacts with ATP.

Belongs to the cytidylate kinase family. Type 1 subfamily.

It is found in the cytoplasm. It carries out the reaction CMP + ATP = CDP + ADP. It catalyses the reaction dCMP + ATP = dCDP + ADP. In Acinetobacter baumannii (strain AB0057), this protein is Cytidylate kinase.